The sequence spans 561 residues: Sesquiterpene synthase 1 (561 aa).

Positions 313, 317, 458, and 466 each coordinate Mg(2+). The short motif at 313–317 is the DDXXD motif element; that stretch reads DDIYD.

It belongs to the terpene synthase family. Tpsa subfamily. The cofactor is Mn(2+). It depends on Mg(2+) as a cofactor.

The protein resides in the cytoplasm. The enzyme catalyses (2E,6E)-farnesyl diphosphate = (1S,8aR)-delta-cadinene + diphosphate. It participates in secondary metabolite biosynthesis; terpenoid biosynthesis. Functionally, involved in the biosynthesis of delta-cadinene. The sequence is that of Sesquiterpene synthase 1 (STS1) from Thapsia garganica (Deadly carrot).